A 462-amino-acid polypeptide reads, in one-letter code: Juvenile hormone epoxide hydrolase (462 aa).

Residues 4–24 (ILSSFVAGVAIGSGLVITYVL) traverse the membrane as a helical segment. Residue D227 is the Nucleophile of the active site. Residue Y372 is the Proton donor of the active site. H428 serves as the catalytic Proton acceptor.

It belongs to the peptidase S33 family.

It localises to the microsome membrane. The protein resides in the endoplasmic reticulum membrane. It catalyses the reaction cis-stilbene oxide + H2O = (1R,2R)-hydrobenzoin. It carries out the reaction 1-(4-methoxyphenyl)-N-methyl-N-[(3-methyloxetan-3-yl)methyl]methanamine + H2O = 2-{[(4-methoxybenzyl)(methyl)amino]methyl}-2-methylpropane-1,3-diol. Functionally, catalyzes juvenile hormone hydrolysis. This Manduca sexta (Tobacco hawkmoth) protein is Juvenile hormone epoxide hydrolase.